We begin with the raw amino-acid sequence, 417 residues long: MSEKSREYYTIARDLMPGGVSSPVRAIQPYPFYTVRGSGSRIYTVDGTELIDCCGAYGPLILGHACKPVGDAISSALDDGWLYGTPTPAEIDLAQILIADHPSIEMVRFVTTGSEATMAAIRLARGYTGKSDIIKTEGGFHGAHDGVLVQAGSGCTTLGQPDSAGVLSDIVRHTRQVPYNDTESLISLVDKSGDEIAAMILEPVMGNIGPVLPKPGYLQEVRKITAEHDILLIFDEVITGYRVGIGGAQKLFGVTPDITTLGKIIGGGLPLSAFGGKRKIMELIAPAGPVYQAGTFSGNPLSLAAGVAALREIHARKGMYTLLDTATTVIGEACQGKGGSFVKLGSMFKFFFRSSVPENYAQAKESDTTKFRAFWEKMLEKGIFLPPSQFETNFLSAAHSDSDVEYLSSAYASCLSA.

At K263 the chain carries N6-(pyridoxal phosphate)lysine.

It belongs to the class-III pyridoxal-phosphate-dependent aminotransferase family. HemL subfamily. Requires pyridoxal 5'-phosphate as cofactor.

The protein resides in the cytoplasm. It catalyses the reaction (S)-4-amino-5-oxopentanoate = 5-aminolevulinate. It functions in the pathway porphyrin-containing compound metabolism; protoporphyrin-IX biosynthesis; 5-aminolevulinate from L-glutamyl-tRNA(Glu): step 2/2. In Methanospirillum hungatei JF-1 (strain ATCC 27890 / DSM 864 / NBRC 100397 / JF-1), this protein is Glutamate-1-semialdehyde 2,1-aminomutase.